Here is a 491-residue protein sequence, read N- to C-terminus: Sodium-dependent glucose transporter 1 (491 aa).

A run of 11 helical transmembrane segments spans residues 26 to 46, 52 to 72, 81 to 101, 119 to 139, 165 to 185, 210 to 230, 255 to 275, 277 to 297, 303 to 323, 338 to 358, and 365 to 385; these read FIFV…GILF, HLLL…VPWC, VMSV…IIIL, FALG…FLPL, LSYI…FILF, AVIF…VAYG, LFWG…TCLY, GTML…LVLF, LLWV…PSGF, SLFV…VGYL, and FPVL…LFPV. Disordered stretches follow at residues 397–425 and 438–491; these read AQYN…DEAQ and NDQM…EKND. A compositionally biased stretch (acidic residues) spans 416–425; it reads MEEEDEDEAQ. Residues 440 to 458 are compositionally biased toward polar residues; the sequence is QMKNSVTVISEDTPGNSAP.

The protein belongs to the major facilitator superfamily.

The protein resides in the apical cell membrane. Functionally, may function as a sodium-dependent glucose transporter. Potential channels for urea in the inner medulla of kidney. The chain is Sodium-dependent glucose transporter 1 (mfsd4b) from Xenopus laevis (African clawed frog).